Here is a 180-residue protein sequence, read N- to C-terminus: Probable RNA 2'-phosphotransferase (180 aa).

It belongs to the KptA/TPT1 family.

In terms of biological role, removes the 2'-phosphate from RNA via an intermediate in which the phosphate is ADP-ribosylated by NAD followed by a presumed transesterification to release the RNA and generate ADP-ribose 1''-2''-cyclic phosphate (APPR&gt;P). May function as an ADP-ribosylase. The polypeptide is Probable RNA 2'-phosphotransferase (Thermococcus kodakarensis (strain ATCC BAA-918 / JCM 12380 / KOD1) (Pyrococcus kodakaraensis (strain KOD1))).